Reading from the N-terminus, the 435-residue chain is Elongation factor 1-alpha (435 aa).

The 226-residue stretch at 6 to 231 (KVHINLVVIG…DALEPPKRPV (226 aa)) folds into the tr-type G domain. A G1 region spans residues 15 to 22 (GHVDSGKS). 15–22 (GHVDSGKS) lines the GTP pocket. A G2 region spans residues 71–75 (GITID). The segment at 92–95 (DAPG) is G3. GTP-binding positions include 92 to 96 (DAPGH) and 154 to 157 (NKMD). Residues 154-157 (NKMD) are G4. The segment at 195-197 (SGF) is G5.

It belongs to the TRAFAC class translation factor GTPase superfamily. Classic translation factor GTPase family. EF-Tu/EF-1A subfamily.

It is found in the cytoplasm. Functionally, this protein promotes the GTP-dependent binding of aminoacyl-tRNA to the A-site of ribosomes during protein biosynthesis. This chain is Elongation factor 1-alpha, found in Tetrahymena pyriformis.